The sequence spans 413 residues: Serine/threonine-protein kinase SSN3 (413 aa).

Residues 26-355 enclose the Protein kinase domain; the sequence is YHIVGFISSG…AQEALEHPYF (330 aa). Residues 32–40 and lysine 56 contribute to the ATP site; that span reads ISSGTYGRV. Aspartate 158 acts as the Proton acceptor in catalysis. Residues 376 to 385 show a composition bias toward basic and acidic residues; the sequence is RRVTQDDNDI. Positions 376–413 are disordered; it reads RRVTQDDNDIRSGSLPGTKRSGLPDDSLMGRASKRLKE.

Belongs to the protein kinase superfamily. CMGC Ser/Thr protein kinase family. CDC2/CDKX subfamily. Component of the srb8-11 complex, a regulatory module of the Mediator complex. Mg(2+) serves as cofactor.

It is found in the nucleus. The enzyme catalyses L-seryl-[protein] + ATP = O-phospho-L-seryl-[protein] + ADP + H(+). It carries out the reaction L-threonyl-[protein] + ATP = O-phospho-L-threonyl-[protein] + ADP + H(+). It catalyses the reaction [DNA-directed RNA polymerase] + ATP = phospho-[DNA-directed RNA polymerase] + ADP + H(+). Component of the srb8-11 complex. The srb8-11 complex is a regulatory module of the Mediator complex which is itself involved in regulation of basal and activated RNA polymerase II-dependent transcription. The srb8-11 complex may be involved in the transcriptional repression of a subset of genes regulated by Mediator. It may inhibit the association of the Mediator complex with RNA polymerase II to form the holoenzyme complex. The srb8-11 complex phosphorylates the C-terminal domain (CTD) of the largest subunit of RNA polymerase II. The chain is Serine/threonine-protein kinase SSN3 (ssn3) from Aspergillus oryzae (strain ATCC 42149 / RIB 40) (Yellow koji mold).